A 310-amino-acid polypeptide reads, in one-letter code: Isoflavone reductase homolog A622-like (310 aa).

Residues 13-19 (GGTGYIG), R38, and K47 contribute to the NADP(+) site. K135 functions as the Proton acceptor in the catalytic mechanism. Position 139 (R139) interacts with NADP(+).

This sequence belongs to the NmrA-type oxidoreductase family. Isoflavone reductase subfamily. Monomer. As to expression, expressed in roots.

It is found in the cytoplasm. Its pathway is alkaloid biosynthesis; nicotine biosynthesis. Its function is as follows. Involved in the biosynthesis of pyridine alkaloid natural products, leading mainly to the production of anabasine, anatabine, nicotine and nornicotine, effective deterrents against herbivores with antiparasitic and pesticide properties (neurotoxins); nornicotine serves as the precursor in the synthesis of the carcinogen compound N'-nitrosonornicotine (NNN). Reductase that may be involved in a late step of tobacco alkaloid biosynthesis. Maybe involved in either the formation of a nicotinic acid-derived precursor or the final condensation reaction of tobacco alkaloids. This is Isoflavone reductase homolog A622-like from Nicotiana tabacum (Common tobacco).